We begin with the raw amino-acid sequence, 211 residues long: Dual specificity protein phosphatase 26 (211 aa).

A Tyrosine-protein phosphatase domain is found at 60-207 (NHADEVWPGL…LLALDRRLRQ (148 aa)). The active-site Phosphocysteine intermediate is the Cys152.

Belongs to the protein-tyrosine phosphatase family. Non-receptor class dual specificity subfamily. As to quaternary structure, interacts with HSF4. In terms of tissue distribution, brain. In the brain it is expressed ubiquitously except in the hippocampus. Expressed in embryonal cancers (retinoblastoma, neuroepithilioma and neuroblastoma) and in anaplatic thyroid cancer.

The protein localises to the cytoplasm. The protein resides in the nucleus. It localises to the golgi apparatus. It catalyses the reaction O-phospho-L-tyrosyl-[protein] + H2O = L-tyrosyl-[protein] + phosphate. The catalysed reaction is O-phospho-L-seryl-[protein] + H2O = L-seryl-[protein] + phosphate. The enzyme catalyses O-phospho-L-threonyl-[protein] + H2O = L-threonyl-[protein] + phosphate. In terms of biological role, inactivates MAPK1 and MAPK3 which leads to dephosphorylation of heat shock factor protein 4 and a reduction in its DNA-binding activity. Inhibits MAP kinase p38 by dephosphorylating it and inhibits p38-mediated apoptosis in anaplastic thyroid cancer cells. Can also induce activation of MAP kinase p38 and c-Jun N-terminal kinase (JNK). This chain is Dual specificity protein phosphatase 26 (DUSP26), found in Homo sapiens (Human).